We begin with the raw amino-acid sequence, 233 residues long: Ubiquitin carboxyl-terminal hydrolase isozyme L4 (233 aa).

In terms of domain architecture, UCH catalytic spans 5 to 232 (RWLPLEANPE…LRFNAIALSA (228 aa)). An interaction with ubiquitin region spans residues 8 to 13 (PLEANP). Cys95 serves as the catalytic Nucleophile. Ser133 bears the Phosphoserine mark. The active-site Proton donor is the His172. Positions 222 to 227 (ELRFNA) are interaction with ubiquitin.

This sequence belongs to the peptidase C12 family. Expressed in various tissues at low level.

The protein resides in the cytoplasm. It carries out the reaction Thiol-dependent hydrolysis of ester, thioester, amide, peptide and isopeptide bonds formed by the C-terminal Gly of ubiquitin (a 76-residue protein attached to proteins as an intracellular targeting signal).. Its function is as follows. Ubiquitin-protein hydrolase is involved both in the processing of ubiquitin precursors and of ubiquitinated proteins. This enzyme is a thiol protease that recognizes and hydrolyzes a peptide bond at the C-terminal glycine of ubiquitin. In Mus musculus (Mouse), this protein is Ubiquitin carboxyl-terminal hydrolase isozyme L4 (Uchl4).